A 357-amino-acid chain; its full sequence is Protein Wnt-9b (357 aa).

The signal sequence occupies residues 1 to 22; sequence MRPPPALALAGLCLLALPAAAA. 11 disulfides stabilise this stretch: cysteine 89-cysteine 100, cysteine 135-cysteine 143, cysteine 145-cysteine 162, cysteine 210-cysteine 224, cysteine 212-cysteine 219, cysteine 291-cysteine 316, cysteine 305-cysteine 311, cysteine 315-cysteine 355, cysteine 331-cysteine 346, cysteine 333-cysteine 343, and cysteine 338-cysteine 339. A glycan (N-linked (GlcNAc...) asparagine) is linked at asparagine 99. Serine 216 carries the O-palmitoleoyl serine; by PORCN lipid modification.

This sequence belongs to the Wnt family. In terms of assembly, forms a soluble 1:1 complex with AFM; this prevents oligomerization and is required for prolonged biological activity. The complex with AFM may represent the physiological form in body fluids. Component of the Wnt-Fzd-LRP5-LRP6 signaling complex that contains a WNT protein, a FZD protein and LRP5 or LRP6. Interacts directly in the complex with LRP6. Interacts with PKD1 (via extracellular domain). Palmitoleoylation is required for efficient binding to frizzled receptors. Depalmitoleoylation leads to Wnt signaling pathway inhibition. In terms of tissue distribution, moderately expressed in fetal kidney and adult kidney. Also found in brain.

It localises to the secreted. Its subcellular location is the extracellular space. The protein resides in the extracellular matrix. Functionally, ligand for members of the frizzled family of seven transmembrane receptors. Functions in the canonical Wnt/beta-catenin signaling pathway. Required for normal embryonic kidney development, and for normal development of the urogenital tract, including uterus and part of the oviduct and the upper vagina in females, and epididymis and vas deferens in males. Activates a signaling cascade in the metanephric mesenchyme that induces tubulogenesis. Acts upstream of WNT4 in the signaling pathways that mediate development of kidney tubules and the Muellerian ducts. Plays a role in cranofacial development and is required for normal fusion of the palate during embryonic development. The chain is Protein Wnt-9b (WNT9B) from Homo sapiens (Human).